Here is a 210-residue protein sequence, read N- to C-terminus: Peptidyl-tRNA hydrolase (210 aa).

Tyr30 lines the tRNA pocket. The active-site Proton acceptor is the His35. TRNA is bound by residues Tyr81, Asn83, and Asn129.

The protein belongs to the PTH family. As to quaternary structure, monomer.

It localises to the cytoplasm. The enzyme catalyses an N-acyl-L-alpha-aminoacyl-tRNA + H2O = an N-acyl-L-amino acid + a tRNA + H(+). Functionally, hydrolyzes ribosome-free peptidyl-tRNAs (with 1 or more amino acids incorporated), which drop off the ribosome during protein synthesis, or as a result of ribosome stalling. Its function is as follows. Catalyzes the release of premature peptidyl moieties from peptidyl-tRNA molecules trapped in stalled 50S ribosomal subunits, and thus maintains levels of free tRNAs and 50S ribosomes. This is Peptidyl-tRNA hydrolase from Bordetella petrii (strain ATCC BAA-461 / DSM 12804 / CCUG 43448).